The sequence spans 254 residues: Probable triosephosphate isomerase 2 (254 aa).

9-11 (NMK) serves as a coordination point for substrate. The Electrophile role is filled by His96. Glu168 functions as the Proton acceptor in the catalytic mechanism. Residues Gly174 and Ser212 each contribute to the substrate site.

It belongs to the triosephosphate isomerase family. In terms of assembly, homodimer.

The protein localises to the cytoplasm. The catalysed reaction is D-glyceraldehyde 3-phosphate = dihydroxyacetone phosphate. Its pathway is carbohydrate biosynthesis; gluconeogenesis. It functions in the pathway carbohydrate degradation; glycolysis; D-glyceraldehyde 3-phosphate from glycerone phosphate: step 1/1. Involved in the gluconeogenesis. Catalyzes stereospecifically the conversion of dihydroxyacetone phosphate (DHAP) to D-glyceraldehyde-3-phosphate (G3P). The protein is Probable triosephosphate isomerase 2 of Listeria monocytogenes serotype 4b (strain F2365).